The sequence spans 486 residues: Heme A synthase COX15 (486 aa).

Residues 1-33 (MLFRNIEVGRQAAKLLTRTSSRLAWQSIGASRN) constitute a mitochondrion transit peptide. Residues 34-85 (ISTIRQQIRKTQLYNFKKTVSIRPFSLSSPVFKPHVASESNPIESRLKTSKN) are Mitochondrial matrix-facing. A helical transmembrane segment spans residues 86–106 (VAYWLIGTSGLVFGIVVLGGL). Topologically, residues 107–170 (TRLTESGLSI…FIFFMEWIHR (64 aa)) are mitochondrial intermembrane. Residue His-169 coordinates heme o. The helical transmembrane segment at 171–191 (LWGRAIGAVFILPAVYFAVSK) threads the bilayer. Residues 192 to 200 (KTSGHVNKR) lie on the Mitochondrial matrix side of the membrane. Residues 201–221 (LFGLAGLLGLQGFVGWWMVKS) form a helical membrane-spanning segment. At 222–243 (GLDQEQLDARKSKPTVSQYRLT) the chain is on the mitochondrial intermembrane side. Residues 244–264 (THLGTAFFLYMGMLWTGLEIL) form a helical membrane-spanning segment. His-245 lines the heme o pocket. Residues 265 to 293 (RECKWIKNPVQAISLFKKLDNPAIGPMRK) lie on the Mitochondrial matrix side of the membrane. A helical transmembrane segment spans residues 294-314 (ISLALLAVSFLTAMSGGMVAG). The Mitochondrial intermembrane segment spans residues 315–364 (LDAGWVYNTWPKMGERWFPSSRELMDENFCRREDKKDLWWRNLLENPVTV). A helical transmembrane segment spans residues 365-387 (QLVHRTCAYVAFTSVLAAHMYAI). His-368 serves as a coordination point for heme b. Residues 388–402 (KKKAVIPRNAMTSLH) lie on the Mitochondrial matrix side of the membrane. Residues 403-423 (VMMGVVTLQATLGILTILYLV) form a helical membrane-spanning segment. Residue Pro-424 is a topological domain, mitochondrial intermembrane. The chain crosses the membrane as a helical span at residues 425 to 445 (ISLASIHQAGALALLTSSLVF). Heme b is bound at residue His-431. Residues 446-486 (ASQLRKPRAPMRNVIITLPHSSKVTSGKILSEASKLASKPL) are Mitochondrial matrix-facing.

Belongs to the COX15/CtaA family. Type 2 subfamily. In terms of assembly, forms 200-350 kDa oligomeric complexes independent on heme binding. In addition to form homooligomeric complexes, a portion also associates with the mitochondrial respiratory supercomplexes. Interacts with CcO assembly factors PET117, SHY1, COA3 and COA1, CcO subunit COX13 and cytochrome b-c1 subunit COR1. Heme b serves as cofactor.

The protein localises to the mitochondrion inner membrane. It catalyses the reaction Fe(II)-heme o + 2 A + H2O = Fe(II)-heme a + 2 AH2. It participates in porphyrin-containing compound metabolism; heme A biosynthesis; heme A from heme O: step 1/1. Catalyzes the second reaction in the biosynthesis of heme A, a prosthetic group of mitochondrial cytochrome c oxidase (CcO). Heme A is synthesized from heme B by two sequential enzymatic reactions catalyzed by heme O synthase (HOS/COX10) and heme A synthase (HAS/COX15). HAS catalyzes the conversion of heme O to heme A by two successive hydroxylations of the methyl group at C8, in a reaction that involves matrix ferredoxin YAH1 and ferredoxin reductase ARH1. The first hydroxylation forms heme I, the second hydroxylation results in an unstable dihydroxymethyl group, which spontaneously dehydrates, resulting in the formyl group of heme A. May also play a secondary role in CcO assembly. Plays a role in the maturation of COX1, the heme A-containing structural CcO subunit, possibly by interacting with the COX1-containing sub-assembly complexes that form prior to heme A insertion. May also positively regulate the upstream enzymatic reaction, farnesylation of heme B by HOS/COX10. This is Heme A synthase COX15 from Saccharomyces cerevisiae (strain ATCC 204508 / S288c) (Baker's yeast).